The sequence spans 404 residues: Sorting nexin-32 (404 aa).

Residues 1–10 are compositionally biased toward basic and acidic residues; it reads MEEQHQEAGN. The segment at 1–29 is disordered; the sequence is MEEQHQEAGNESKPSSTSVDLQGDSPLQV. Polar residues predominate over residues 11-20; the sequence is ESKPSSTSVD. Positions 21–168 constitute a PX domain; sequence LQGDSPLQVE…SVFLEYSQDL (148 aa). Positions 255–336 form a coiled coil; it reads TQEVNQLKRS…KARTRNREVR (82 aa).

The protein belongs to the sorting nexin family.

May be involved in several stages of intracellular trafficking. The polypeptide is Sorting nexin-32 (Snx32) (Mus musculus (Mouse)).